A 355-amino-acid chain; its full sequence is Phosphoserine aminotransferase (355 aa).

Residue arginine 41 coordinates L-glutamate. Pyridoxal 5'-phosphate contacts are provided by residues 75–76, tryptophan 99, threonine 147, aspartate 166, and glutamine 189; that span reads AS. An N6-(pyridoxal phosphate)lysine modification is found at lysine 190. 231–232 is a pyridoxal 5'-phosphate binding site; it reads NT.

This sequence belongs to the class-V pyridoxal-phosphate-dependent aminotransferase family. SerC subfamily. In terms of assembly, homodimer. It depends on pyridoxal 5'-phosphate as a cofactor.

It is found in the cytoplasm. It catalyses the reaction O-phospho-L-serine + 2-oxoglutarate = 3-phosphooxypyruvate + L-glutamate. It carries out the reaction 4-(phosphooxy)-L-threonine + 2-oxoglutarate = (R)-3-hydroxy-2-oxo-4-phosphooxybutanoate + L-glutamate. It functions in the pathway amino-acid biosynthesis; L-serine biosynthesis; L-serine from 3-phospho-D-glycerate: step 2/3. It participates in cofactor biosynthesis; pyridoxine 5'-phosphate biosynthesis; pyridoxine 5'-phosphate from D-erythrose 4-phosphate: step 3/5. Functionally, catalyzes the reversible conversion of 3-phosphohydroxypyruvate to phosphoserine and of 3-hydroxy-2-oxo-4-phosphonooxybutanoate to phosphohydroxythreonine. This Bacteroides thetaiotaomicron (strain ATCC 29148 / DSM 2079 / JCM 5827 / CCUG 10774 / NCTC 10582 / VPI-5482 / E50) protein is Phosphoserine aminotransferase.